We begin with the raw amino-acid sequence, 202 residues long: Matrix protein (202 aa).

Residues 35–38 carry the PPXY motif motif; sequence PPEY. An essential for glycoprotein binding region spans residues 115 to 151; sequence KLRRTLIFQWADSRGPLEGEELEYSQEITWDDDTEFV.

This sequence belongs to the lyssavirus matrix protein family. As to quaternary structure, homomultimer. Interacts with nucleoprotein and with the cytoplasmic domain of glycoprotein. Interacts with host ATP6V1A; this interaction plays an important role in virion uncoating after viral entry.

It localises to the virion membrane. Its subcellular location is the host endomembrane system. The protein localises to the host cytoplasm. Plays a major role in assembly, budding and uncoating of virion after membrane fusion. Completely covers the ribonucleoprotein coil and keep it in condensed bullet-shaped form. Inhibits viral transcription and stimulates replication. Plays a major role in early induction of TRAIL-mediated apoptosis in infected neurons. Inhibits the integrated stress response (ISR) in the infected cell by blocking the formation of stress granules. In Rabies virus (strain CVS-11) (RABV), this protein is Matrix protein (M).